Consider the following 37-residue polypeptide: Large ribosomal subunit protein bL36A (37 aa).

Belongs to the bacterial ribosomal protein bL36 family.

The polypeptide is Large ribosomal subunit protein bL36A (Neisseria meningitidis serogroup C (strain 053442)).